The chain runs to 194 residues: Dihydrofolate reductase HdrB (194 aa).

Positions 18–194 (RFVLVAAVAD…ADRGAEESDE (177 aa)) constitute a DHFR domain. NADP(+) contacts are provided by residues A24 and 30–36 (VIGRDGT). Position 44 (D44) interacts with substrate. 62-63 (KT) contributes to the NADP(+) binding site. The substrate site is built by R69 and R78. NADP(+) is bound by residues 84–85 (TT) and 123–130 (GGATVYEQ). Substrate is bound at residue T141. Residues 173–194 (SFVTYERKQPAAADRGAEESDE) are disordered.

Belongs to the dihydrofolate reductase family.

It catalyses the reaction (6S)-5,6,7,8-tetrahydrofolate + NADP(+) = 7,8-dihydrofolate + NADPH + H(+). It participates in cofactor biosynthesis; tetrahydrofolate biosynthesis; 5,6,7,8-tetrahydrofolate from 7,8-dihydrofolate: step 1/1. With respect to regulation, maximum activity at KCl concentration of 0.5 M and activity decreases with increasing concentration of KCl. Key enzyme in folate metabolism. Catalyzes an essential reaction for de novo glycine and purine synthesis, and for DNA precursor synthesis. In Haloferax volcanii (Halobacterium volcanii), this protein is Dihydrofolate reductase HdrB (hdrB).